Reading from the N-terminus, the 320-residue chain is uncharacterized protein (320 aa).

7 helical membrane-spanning segments follow: residues 107-127 (LSKE…AGIY), 131-151 (VALL…IALS), 169-189 (LIAE…YLPI), 200-220 (ITLD…GSLS), 228-248 (IAVG…FGLL), 260-280 (ALIL…VIFS), and 299-319 (TLYA…LIIY).

The protein localises to the cell membrane. This is an uncharacterized protein from Methanocaldococcus jannaschii (strain ATCC 43067 / DSM 2661 / JAL-1 / JCM 10045 / NBRC 100440) (Methanococcus jannaschii).